Consider the following 258-residue polypeptide: Peptide methionine sulfoxide reductase A4, chloroplastic (258 aa).

A chloroplast-targeting transit peptide spans 1 to 53 (MQVLVVSPPLIAAASLSKPLNSLSKAALSFSRAKPICPFPQTSRRPISVYKSP). Methionine 54 carries the N-acetylmethionine modification. The segment at 62 to 89 (GFGSRPQAQADPSSAAIAQGPDDDVPSS) is disordered. Phosphoserine is present on serine 245.

It belongs to the MsrA Met sulfoxide reductase family. As to expression, expressed in rosette and cauline leaves, and at lower levels in stems and flowers (at protein level).

It is found in the plastid. It localises to the chloroplast stroma. The catalysed reaction is L-methionyl-[protein] + [thioredoxin]-disulfide + H2O = L-methionyl-(S)-S-oxide-[protein] + [thioredoxin]-dithiol. It carries out the reaction [thioredoxin]-disulfide + L-methionine + H2O = L-methionine (S)-S-oxide + [thioredoxin]-dithiol. Its function is as follows. Catalyzes the reduction of methionine sulfoxide (MetSO) to methionine in proteins. Plays a protective role against oxidative stress by restoring activity to proteins that have been inactivated by methionine oxidation. Prevents the methionine sulfoxidation of the heat shock protein HSP21 and its subsequent inactivation. MSRA family specifically reduces the MetSO S-enantiomer. The chain is Peptide methionine sulfoxide reductase A4, chloroplastic (MSR4) from Arabidopsis thaliana (Mouse-ear cress).